We begin with the raw amino-acid sequence, 147 residues long: Small ribosomal subunit protein uS5 (147 aa).

An S5 DRBM domain is found at 9–72; that stretch reads FEEVIVDIGR…DDAFKNIIHV (64 aa).

It belongs to the universal ribosomal protein uS5 family. As to quaternary structure, part of the 30S ribosomal subunit. Contacts proteins S4 and S8.

Functionally, with S4 and S12 plays an important role in translational accuracy. Its function is as follows. Located at the back of the 30S subunit body where it stabilizes the conformation of the head with respect to the body. The protein is Small ribosomal subunit protein uS5 of Campylobacter curvus (strain 525.92).